Consider the following 303-residue polypeptide: MNPQELKSILSHGLLSFPVTDFNAQGDFNPAGYIKRLEWLAPYGASALFAAGGTGEFFSLAASEYSQVIKTAVDTCATSVPILAGVGGSTRQAIEYAQEAERLGAKGLLLLPHYLTEASQDGVAAHVEAVCKSVNIGVVVYNRNVCRLNADLLEKLAERCPNLIGYKDGLGDIELMVSIRRRLGERFSYLGGLPTAEVYAAAYKALGVPVYSSAVFNFVPKTAMDFYSAIARDDHAAVAKLIDDFFLPYLDIRNRKAGYAVSIVKAGAKIAGYDAGPVRTPLTDLTAEEYEMLAALMDKMGPQ.

The protein belongs to the DapA family.

The enzyme catalyses 5-dehydro-4-deoxy-D-glucarate + H(+) = 2,5-dioxopentanoate + CO2 + H2O. It functions in the pathway carbohydrate acid metabolism; D-glucarate degradation; 2,5-dioxopentanoate from D-glucarate: step 2/2. This Pseudomonas putida (strain GB-1) protein is Probable 5-dehydro-4-deoxyglucarate dehydratase.